A 734-amino-acid chain; its full sequence is Photosystem I P700 chlorophyll a apoprotein A2 (734 aa).

Transmembrane regions (helical) follow at residues 46 to 69, 135 to 158, 175 to 199, 273 to 291, 330 to 353, 369 to 395, 417 to 439, and 517 to 535; these read IFAS…FHVA, LYIG…LHLQ, LNHH…HVAL, IAHH…GHMY, LHFQ…QHMY, AALY…IFFI, AIIS…LYVH, and FLVH…LILV. Cys559 and Cys568 together coordinate [4Fe-4S] cluster. A run of 2 helical transmembrane segments spans residues 575–596 and 643–665; these read AFYL…YWHW and LSVW…MFLI. Positions 654, 662, and 670 each coordinate chlorophyll a. Residue Trp671 participates in phylloquinone binding. Residues 707-727 traverse the membrane as a helical segment; sequence LVGLVHFSVGYIFTYAAFLIA.

Belongs to the PsaA/PsaB family. As to quaternary structure, the PsaA/B heterodimer binds the P700 chlorophyll special pair and subsequent electron acceptors. PSI consists of a core antenna complex that captures photons, and an electron transfer chain that converts photonic excitation into a charge separation. The eukaryotic PSI reaction center is composed of at least 11 subunits. P700 is a chlorophyll a/chlorophyll a' dimer, A0 is one or more chlorophyll a, A1 is one or both phylloquinones and FX is a shared 4Fe-4S iron-sulfur center. is required as a cofactor.

It is found in the plastid. It localises to the chloroplast thylakoid membrane. It carries out the reaction reduced [plastocyanin] + hnu + oxidized [2Fe-2S]-[ferredoxin] = oxidized [plastocyanin] + reduced [2Fe-2S]-[ferredoxin]. Functionally, psaA and PsaB bind P700, the primary electron donor of photosystem I (PSI), as well as the electron acceptors A0, A1 and FX. PSI is a plastocyanin-ferredoxin oxidoreductase, converting photonic excitation into a charge separation, which transfers an electron from the donor P700 chlorophyll pair to the spectroscopically characterized acceptors A0, A1, FX, FA and FB in turn. Oxidized P700 is reduced on the lumenal side of the thylakoid membrane by plastocyanin. The sequence is that of Photosystem I P700 chlorophyll a apoprotein A2 from Gnetum parvifolium (Small-leaved jointfir).